The sequence spans 435 residues: Trigger factor (435 aa).

In terms of domain architecture, PPIase FKBP-type spans 163–248; it reads GDYVTFDFKG…IKEIKVKELP (86 aa).

Belongs to the FKBP-type PPIase family. Tig subfamily.

It localises to the cytoplasm. The catalysed reaction is [protein]-peptidylproline (omega=180) = [protein]-peptidylproline (omega=0). Functionally, involved in protein export. Acts as a chaperone by maintaining the newly synthesized protein in an open conformation. Functions as a peptidyl-prolyl cis-trans isomerase. In Geotalea daltonii (strain DSM 22248 / JCM 15807 / FRC-32) (Geobacter daltonii), this protein is Trigger factor.